The following is a 279-amino-acid chain: Sperm acrosome membrane-associated protein 1 (279 aa).

The N-terminal stretch at 1 to 29 (MKSRGAGCSARLLLTVGWLLLAGLQSTCG) is a signal peptide. Topologically, residues 30 to 221 (INVTAIQDPS…VIICIFVIFV (192 aa)) are extracellular. N-linked (GlcNAc...) asparagine glycosylation occurs at Asn-31. Positions 39–74 (SLAREGEGEPEGDEEPENDSETEKEPQAEAEDDSEG) are disordered. A compositionally biased stretch (acidic residues) spans 46–58 (GEPEGDEEPENDS). Residues 222–242 (LIFIIINWTAVKDFWAKASTT) form a helical membrane-spanning segment. Over 243–279 (EIQSELSSMRYKDSTSLDQSPTDIPGHEDDALSEWNE) the chain is Cytoplasmic. Tyr-253 is subject to Phosphotyrosine. Positions 253–279 (YKDSTSLDQSPTDIPGHEDDALSEWNE) are disordered. 2 positions are modified to phosphoserine: Ser-262 and Ser-275.

As to quaternary structure, interacts with CYLC1; the interaction may be relevant for proper acrosome attachment to the nuclear envelope. N-glycosylated.

The protein localises to the cytoplasmic vesicle. Its subcellular location is the secretory vesicle. It is found in the acrosome inner membrane. Plays a role in acrosome expansion and establishment of normal sperm morphology during spermatogenesis. Important for male fertility. In Bos taurus (Bovine), this protein is Sperm acrosome membrane-associated protein 1 (SPACA1).